The following is a 451-amino-acid chain: Ribosomal protein uS12 methylthiotransferase RimO (451 aa).

Positions 17 to 127 constitute an MTTase N-terminal domain; the sequence is PTIGFVSLGC…VLAQVHEHLP (111 aa). The [4Fe-4S] cluster site is built by Cys26, Cys62, Cys91, Cys160, Cys164, and Cys167. The region spanning 146 to 383 is the Radical SAM core domain; the sequence is LTPRHYAYLK…MQLQQRISTE (238 aa). The TRAM domain occupies 386–451; sequence KQKVGQTLPV…DEYDLWGTRV (66 aa).

Belongs to the methylthiotransferase family. RimO subfamily. It depends on [4Fe-4S] cluster as a cofactor.

The protein resides in the cytoplasm. It carries out the reaction L-aspartate(89)-[ribosomal protein uS12]-hydrogen + (sulfur carrier)-SH + AH2 + 2 S-adenosyl-L-methionine = 3-methylsulfanyl-L-aspartate(89)-[ribosomal protein uS12]-hydrogen + (sulfur carrier)-H + 5'-deoxyadenosine + L-methionine + A + S-adenosyl-L-homocysteine + 2 H(+). In terms of biological role, catalyzes the methylthiolation of an aspartic acid residue of ribosomal protein uS12. This chain is Ribosomal protein uS12 methylthiotransferase RimO, found in Cellvibrio japonicus (strain Ueda107) (Pseudomonas fluorescens subsp. cellulosa).